Here is a 185-residue protein sequence, read N- to C-terminus: GTP-binding protein rhb1 (185 aa).

GTP is bound by residues Ser16, Gly18, Lys19, Ser20, Ser21, Val32, Tyr35, Thr38, Asn119, Asp122, and Ala150. Residue Ser20 coordinates Mg(2+). The Effector region motif lies at 35-43 (YYPTIENTF). Mg(2+) is bound at residue Thr38. A Cysteine methyl ester modification is found at Cys182. Cys182 carries the S-farnesyl cysteine lipid modification. Positions 183-185 (VIA) are cleaved as a propeptide — removed in mature form.

This sequence belongs to the small GTPase superfamily. Rheb family.

It localises to the cell membrane. It carries out the reaction GTP + H2O = GDP + phosphate + H(+). Its function is as follows. Binds GTP and exhibits intrinsic GTPase activity. Regulates entry into stationary phase when extracellular nitrogen levels are adequate for growth. This chain is GTP-binding protein rhb1 (rhb1), found in Schizosaccharomyces pombe (strain 972 / ATCC 24843) (Fission yeast).